Reading from the N-terminus, the 337-residue chain is Cytoskeleton protein RodZ (337 aa).

Residues 1-111 (MNTEATHDQN…LGKRRKKRDG (111 aa)) lie on the Cytoplasmic side of the membrane. The HTH cro/C1-type domain maps to 19–71 (LRNAREQLGLSQQAVAERLCLKVSTVRDIEEDKAPADLASTFLRGYIRSYARL). Positions 30 to 49 (QQAVAERLCLKVSTVRDIEE) form a DNA-binding region, H-T-H motif. A helical; Signal-anchor for type II membrane protein transmembrane segment spans residues 112–132 (WLMTFTWLVLFVVIGLSGAWW). Residues 133-337 (WQDHKAQQEE…TLNAEQSPAQ (205 aa)) lie on the Periplasmic side of the membrane. Positions 145–167 (TMADQSSAELSSNSEQGQSVPLN) are enriched in polar residues. The disordered stretch occupies residues 145–236 (TMADQSSAEL…TAATTPDGAA (92 aa)). The span at 168 to 207 (TSTTTDPATTSTPPASVDTTATNTQTPAVTAPAPAVDPQQ) shows a compositional bias: low complexity. Residues 208–218 (NAVVSPSQANV) are compositionally biased toward polar residues. Residues 219–236 (DTAATPAPTAATTPDGAA) show a composition bias toward low complexity.

Belongs to the RodZ family.

It localises to the cell inner membrane. In terms of biological role, cytoskeletal protein that is involved in cell-shape control through regulation of the length of the long axis. This chain is Cytoskeleton protein RodZ, found in Escherichia coli O9:H4 (strain HS).